Reading from the N-terminus, the 468-residue chain is Ribosomal protein uS12 methylthiotransferase RimO (468 aa).

One can recognise an MTTase N-terminal domain in the interval 18-129; that stretch reads PTVAFAHLGC…IVEVLERVEA (112 aa). Residues cysteine 27, cysteine 63, cysteine 92, cysteine 167, cysteine 171, and cysteine 174 each contribute to the [4Fe-4S] cluster site. The 230-residue stretch at 153-382 folds into the Radical SAM core domain; that stretch reads TTGEAVAYLK…MTLQQPISAA (230 aa). The 72-residue stretch at 385-456 folds into the TRAM domain; sequence ARWVGRTVDA…IYDLRAEIVG (72 aa).

This sequence belongs to the methylthiotransferase family. RimO subfamily. [4Fe-4S] cluster is required as a cofactor.

It is found in the cytoplasm. The catalysed reaction is L-aspartate(89)-[ribosomal protein uS12]-hydrogen + (sulfur carrier)-SH + AH2 + 2 S-adenosyl-L-methionine = 3-methylsulfanyl-L-aspartate(89)-[ribosomal protein uS12]-hydrogen + (sulfur carrier)-H + 5'-deoxyadenosine + L-methionine + A + S-adenosyl-L-homocysteine + 2 H(+). Its function is as follows. Catalyzes the methylthiolation of an aspartic acid residue of ribosomal protein uS12. The protein is Ribosomal protein uS12 methylthiotransferase RimO of Synechococcus sp. (strain WH7803).